Here is a 500-residue protein sequence, read N- to C-terminus: FAD-linked oxidoreductase easE (500 aa).

Residues 37–220 form the FAD-binding PCMH-type domain; sequence QGRIPLFTVG…TRATMRVFPD (184 aa).

This sequence belongs to the oxygen-dependent FAD-linked oxidoreductase family. Requires FAD as cofactor.

It functions in the pathway alkaloid biosynthesis; ergot alkaloid biosynthesis. In terms of biological role, FAD-linked oxidoreductase; part of the gene cluster that mediates the biosynthesis of fungal ergot alkaloid. DmaW catalyzes the first step of ergot alkaloid biosynthesis by condensing dimethylallyl diphosphate (DMAP) and tryptophan to form 4-dimethylallyl-L-tryptophan. The second step is catalyzed by the methyltransferase easF that methylates 4-dimethylallyl-L-tryptophan in the presence of S-adenosyl-L-methionine, resulting in the formation of 4-dimethylallyl-L-abrine. The catalase easC and the FAD-dependent oxidoreductase easE then transform 4-dimethylallyl-L-abrine to chanoclavine-I which is further oxidized by easD in the presence of NAD(+), resulting in the formation of chanoclavine-I aldehyde. Chanoclavine-I aldehyde is the precursor of ergoamides and ergopeptines in Clavicipitaceae, and clavine-type alcaloids such as fumiclavine in Trichocomaceae. However, the metabolites downstream of chanoclavine-I aldehyde in Arthrodermataceae have not been identified yet. In Arthroderma benhamiae (strain ATCC MYA-4681 / CBS 112371) (Trichophyton mentagrophytes), this protein is FAD-linked oxidoreductase easE.